The chain runs to 269 residues: 2-dehydro-3-deoxyphosphooctonate aldolase (269 aa).

This sequence belongs to the KdsA family.

Its subcellular location is the cytoplasm. The catalysed reaction is D-arabinose 5-phosphate + phosphoenolpyruvate + H2O = 3-deoxy-alpha-D-manno-2-octulosonate-8-phosphate + phosphate. The protein operates within carbohydrate biosynthesis; 3-deoxy-D-manno-octulosonate biosynthesis; 3-deoxy-D-manno-octulosonate from D-ribulose 5-phosphate: step 2/3. It functions in the pathway bacterial outer membrane biogenesis; lipopolysaccharide biosynthesis. The chain is 2-dehydro-3-deoxyphosphooctonate aldolase from Chlamydia trachomatis serovar L2 (strain ATCC VR-902B / DSM 19102 / 434/Bu).